Here is a 235-residue protein sequence, read N- to C-terminus: Small ribosomal subunit protein uS2c (235 aa).

It belongs to the universal ribosomal protein uS2 family.

Its subcellular location is the plastid. The protein resides in the chloroplast. The protein is Small ribosomal subunit protein uS2c (rps2) of Marchantia polymorpha (Common liverwort).